The following is a 381-amino-acid chain: Succinate--CoA ligase [ADP-forming] subunit beta (381 aa).

Positions 9–236 constitute an ATP-grasp domain; that stretch reads KTIFADAGIP…ESYEDDLERK (228 aa). Residues lysine 45, 52–54, glutamate 91, valine 94, and glutamate 99 contribute to the ATP site; that span reads GRG. Residues asparagine 191 and aspartate 205 each contribute to the Mg(2+) site. Residues asparagine 256 and 313–315 each bind substrate; that span reads GIT.

The protein belongs to the succinate/malate CoA ligase beta subunit family. As to quaternary structure, heterotetramer of two alpha and two beta subunits. The cofactor is Mg(2+).

It carries out the reaction succinate + ATP + CoA = succinyl-CoA + ADP + phosphate. The enzyme catalyses GTP + succinate + CoA = succinyl-CoA + GDP + phosphate. The protein operates within carbohydrate metabolism; tricarboxylic acid cycle; succinate from succinyl-CoA (ligase route): step 1/1. Its function is as follows. Succinyl-CoA synthetase functions in the citric acid cycle (TCA), coupling the hydrolysis of succinyl-CoA to the synthesis of either ATP or GTP and thus represents the only step of substrate-level phosphorylation in the TCA. The beta subunit provides nucleotide specificity of the enzyme and binds the substrate succinate, while the binding sites for coenzyme A and phosphate are found in the alpha subunit. This is Succinate--CoA ligase [ADP-forming] subunit beta from Halorubrum lacusprofundi (strain ATCC 49239 / DSM 5036 / JCM 8891 / ACAM 34).